Consider the following 60-residue polypeptide: Photosystem II reaction center protein L (60 aa).

A helical transmembrane segment spans residues 39–59 (SLYWGLLLIFVLAVLFSSYIF).

Belongs to the PsbL family. In terms of assembly, PSII is composed of 1 copy each of membrane proteins PsbA, PsbB, PsbC, PsbD, PsbE, PsbF, PsbH, PsbI, PsbJ, PsbK, PsbL, PsbM, PsbT, PsbX, PsbY, PsbZ, Psb30/Ycf12, at least 3 peripheral proteins of the oxygen-evolving complex and a large number of cofactors. It forms dimeric complexes.

It localises to the plastid. It is found in the chloroplast thylakoid membrane. In terms of biological role, one of the components of the core complex of photosystem II (PSII). PSII is a light-driven water:plastoquinone oxidoreductase that uses light energy to abstract electrons from H(2)O, generating O(2) and a proton gradient subsequently used for ATP formation. It consists of a core antenna complex that captures photons, and an electron transfer chain that converts photonic excitation into a charge separation. This subunit is found at the monomer-monomer interface and is required for correct PSII assembly and/or dimerization. This chain is Photosystem II reaction center protein L, found in Oedogonium cardiacum (Filamentous green alga).